The chain runs to 278 residues: Protein EXORDIUM-like 4 (278 aa).

The N-terminal stretch at 1–23 is a signal peptide; that stretch reads MAYNYRFAILLVLLSATVGFTAA. Residue asparagine 35 is glycosylated (N-linked (GlcNAc...) asparagine).

Belongs to the EXORDIUM family.

The protein resides in the secreted. It localises to the extracellular space. The protein localises to the apoplast. Functionally, may play a role in a brassinosteroid-dependent regulation of growth and development. This is Protein EXORDIUM-like 4 (EXL4) from Arabidopsis thaliana (Mouse-ear cress).